A 342-amino-acid chain; its full sequence is 6-hydroxytryprostatin B O-methyltransferase (342 aa).

Residue Asp201 participates in S-adenosyl-L-methionine binding. Catalysis depends on His244, which acts as the Proton acceptor.

The protein belongs to the class I-like SAM-binding methyltransferase superfamily. Cation-independent O-methyltransferase family. As to quaternary structure, homodimer.

The enzyme catalyses 6-hydroxytryprostatin B + S-adenosyl-L-methionine = tryprostatin A + S-adenosyl-L-homocysteine + H(+). It functions in the pathway alkaloid biosynthesis. Its function is as follows. 6-hydroxytryprostatin B O-methyltransferase; part of the gene cluster that mediates the biosynthesis of fumitremorgins, indole alkaloids that carry not only intriguing chemical structures, but also interesting biological and pharmacological activities. The biosynthesis of fumitremorgin-type alkaloids begins by condensation of the two amino acids L-tryptophan and L-proline to brevianamide F, catalyzed by the non-ribosomal peptide synthetase ftmA. Brevianamide F is then prenylated by the prenyltransferase ftmPT1/ftmB in the presence of dimethylallyl diphosphate, resulting in the formation of tryprostatin B. The three cytochrome P450 monooxygenases, ftmP450-1/ftmC, ftmP450-2/ftmE and ftmP450-3/FtmG, are responsible for the conversion of tryprostatin B to 6-hydroxytryprostatin B, tryprostatin A to fumitremorgin C and fumitremorgin C to 12,13-dihydroxyfumitremorgin C, respectively. The putative methyltransferase ftmMT/ftmD is expected for the conversion of 6-hydroxytryprostatin B to tryprostatin A. FtmPT2/FtmH catalyzes the prenylation of 12,13-dihydroxyfumitre-morgin C in the presence of dimethylallyl diphosphate, resulting in the formation of fumitremorgin B. Fumitremorgin B is further converted to verruculogen by ftmOx1/ftmF via the insertion of an endoperoxide bond between the two prenyl moieties. In some fungal species, verruculogen is further converted to fumitremorgin A, but the enzymes involved in this step have not been identified yet. This is 6-hydroxytryprostatin B O-methyltransferase from Aspergillus fumigatus (Neosartorya fumigata).